Reading from the N-terminus, the 239-residue chain is Uridylate kinase (239 aa).

13–16 provides a ligand contact to ATP; it reads KVSG. Gly-55 serves as a coordination point for UMP. Positions 56 and 60 each coordinate ATP. UMP contacts are provided by residues Asp-75 and 136-143; that span reads TGNPFFTT. Positions 163, 164, 169, and 172 each coordinate ATP.

This sequence belongs to the UMP kinase family. As to quaternary structure, homohexamer.

Its subcellular location is the cytoplasm. The enzyme catalyses UMP + ATP = UDP + ADP. It functions in the pathway pyrimidine metabolism; CTP biosynthesis via de novo pathway; UDP from UMP (UMPK route): step 1/1. Its activity is regulated as follows. Inhibited by UTP. Catalyzes the reversible phosphorylation of UMP to UDP. This Bartonella quintana (strain Toulouse) (Rochalimaea quintana) protein is Uridylate kinase.